The following is a 1163-amino-acid chain: NACHT, LRR and PYD domains-containing protein 5 (1163 aa).

3 stretches are compositionally biased toward basic and acidic residues: residues 1-42 (MGPP…KDQG), 56-94 (PEKE…KDQG), and 108-127 (PEKD…EQKS). Residues 1-201 (MGPPEKESKA…TEADKDNGGD (201 aa)) are disordered. Positions 128-137 (ESTMSPSENV) are enriched in polar residues. The segment covering 153–173 (ASERKMTSPENDSKSIQKDQG) has biased composition (basic and acidic residues). Residues 243–565 (HTIILHGRPG…AALYYVLEGL (323 aa)) enclose the NACHT domain. 249-256 (GRPGVGKS) lines the ATP pocket. LRR repeat units lie at residues 801–822 (NLKY…LACE), 830–851 (SVET…MIST), 858–878 (RLKC…ISLG), 887–906 (LLQK…CHLL), 915–935 (NLTH…QQLC), 944–964 (ALQR…GFLA), 972–993 (KLTH…LLCE), 1001–1022 (YLQE…DLAC), 1029–1050 (HLKS…TLCE), 1058–1079 (SLRR…ALSL), and 1086–1107 (HLNS…KLCS).

This sequence belongs to the NLRP family. As to quaternary structure, component of the subcortical maternal complex (SCMC), at least composed of NLRP5, KHDC3, OOEP, and TLE6. Within the complex, interacts with OOEP, KHDC3 and TLE6. The SCMC may facilitate translocation of its components between the nuclear and cytoplasmic compartments. As part of the SCMC interacts with the SCMC-associated protein ZBED3. As part of the SCMC interacts with the SCMC-associated protein CFL1/Cofilin-1. Interacts with PRKCE. Interacts with TUBB3 at cytoskeleton microtubules. Phosphorylated by PRKCE.

It localises to the cytoplasm. The protein resides in the cytoplasmic vesicle. The protein localises to the secretory vesicle. It is found in the cortical granule. Its subcellular location is the mitochondrion. It localises to the nucleus. The protein resides in the nucleolus. The protein localises to the golgi apparatus. In terms of biological role, component of the subcortical maternal complex (SCMC), a multiprotein complex that plays a key role in early embryonic development. The SCMC complex is a structural constituent of cytoplasmic lattices, which consist in fibrous structures found in the cytoplasm of oocytes and preimplantation embryos. They are required to store maternal proteins critical for embryonic development, such as proteins that control epigenetic reprogramming of the preimplantation embryo, and prevent their degradation or activation. Required for the localization of cortical granules to the cortex of oocytes, via association with the cortical actin scaffold. Required for cortical actin clearance prior to oocyte exocytosis and prevention of polyspermy. Involved in regulating post-fertilization Ca(2+) release and endoplasmic reticulum storage (ER) storage via regulation of cellular localization. May be involved in the localization of mitochondria to the cytoplasm and perinuclear region in oocytes and early stage embryos, independent of its role in CPL formation. The protein is NACHT, LRR and PYD domains-containing protein 5 of Mus musculus (Mouse).